Here is a 545-residue protein sequence, read N- to C-terminus: CTP synthase (545 aa).

Positions 1 to 266 are amidoligase domain; sequence MTTRYIFVTG…DELVIKRFNI (266 aa). Serine 14 serves as a coordination point for CTP. Serine 14 lines the UTP pocket. ATP contacts are provided by residues 15–20 and aspartate 72; that span reads SLGKGI. The Mg(2+) site is built by aspartate 72 and glutamate 140. CTP contacts are provided by residues 147 to 149, 187 to 192, and lysine 223; these read DIE and KTKPTQ. UTP is bound by residues 187–192 and lysine 223; that span reads KTKPTQ. Residue 239-241 coordinates ATP; that stretch reads KDV. In terms of domain architecture, Glutamine amidotransferase type-1 spans 291–542; that stretch reads TIGMVGKYIE…IAASLSHQKR (252 aa). Glycine 352 is an L-glutamine binding site. The active-site Nucleophile; for glutamine hydrolysis is the cysteine 379. L-glutamine contacts are provided by residues 380-383, glutamate 403, and arginine 470; that span reads LGMQ. Catalysis depends on residues histidine 515 and glutamate 517.

The protein belongs to the CTP synthase family. In terms of assembly, homotetramer.

The catalysed reaction is UTP + L-glutamine + ATP + H2O = CTP + L-glutamate + ADP + phosphate + 2 H(+). It carries out the reaction L-glutamine + H2O = L-glutamate + NH4(+). It catalyses the reaction UTP + NH4(+) + ATP = CTP + ADP + phosphate + 2 H(+). It functions in the pathway pyrimidine metabolism; CTP biosynthesis via de novo pathway; CTP from UDP: step 2/2. With respect to regulation, allosterically activated by GTP, when glutamine is the substrate; GTP has no effect on the reaction when ammonia is the substrate. The allosteric effector GTP functions by stabilizing the protein conformation that binds the tetrahedral intermediate(s) formed during glutamine hydrolysis. Inhibited by the product CTP, via allosteric rather than competitive inhibition. Functionally, catalyzes the ATP-dependent amination of UTP to CTP with either L-glutamine or ammonia as the source of nitrogen. Regulates intracellular CTP levels through interactions with the four ribonucleotide triphosphates. In Shewanella denitrificans (strain OS217 / ATCC BAA-1090 / DSM 15013), this protein is CTP synthase.